Here is a 286-residue protein sequence, read N- to C-terminus: ATP synthase gamma chain (286 aa).

Belongs to the ATPase gamma chain family. In terms of assembly, F-type ATPases have 2 components, CF(1) - the catalytic core - and CF(0) - the membrane proton channel. CF(1) has five subunits: alpha(3), beta(3), gamma(1), delta(1), epsilon(1). CF(0) has three main subunits: a, b and c.

Its subcellular location is the cell inner membrane. Its function is as follows. Produces ATP from ADP in the presence of a proton gradient across the membrane. The gamma chain is believed to be important in regulating ATPase activity and the flow of protons through the CF(0) complex. The sequence is that of ATP synthase gamma chain from Shewanella oneidensis (strain ATCC 700550 / JCM 31522 / CIP 106686 / LMG 19005 / NCIMB 14063 / MR-1).